The sequence spans 229 residues: MLTSTLLALASAALASAHTVITYPGWRGNNLKDNEEFPYGMQWTYPCGGLTLTQNRTYWPTTGGAISFQPGWFQGHATAFIYVNLGIGNDGPDGGPKNMSFPMVSPFQIIGPGKNPYPGTFCLPQVSTPAGFEFKEGDNATIQLVELAIHGAALYSCVDITFVPPGDPRVAQVNESNCFNSTDLGAADLYTINILESGRDRLALTSAAASLARMAGWVPLVAGGLWLML.

The N-terminal stretch at M1–A17 is a signal peptide. H18 serves as a coordination point for Cu(2+). 2 disulfide bridges follow: C47/C157 and C122/C178. Residues N55, N98, N139, N174, and N180 are each glycosylated (N-linked (GlcNAc...) asparagine). S206 carries GPI-anchor amidated serine lipidation. Positions A207–L229 are cleaved as a propeptide — removed in mature form.

Belongs to the X325 family. It depends on Cu(2+) as a cofactor.

The protein localises to the cell membrane. Lytic polysaccharide monooxygenase-like protein that has diverged to biological functions other than polysaccharide degradation since it does not perform oxidative cleavage of polysaccharides. Acts as the major cell wall sensor that regulates MAK-1-dependent hyphal anastomosis, the fusion of hyphal cells. May also act as a cell surface-bound protein that functions in the copper-accumulation pathway. The chain is Lytic polysaccharide monooxygenase-like protein ham-7 from Neurospora crassa (strain ATCC 24698 / 74-OR23-1A / CBS 708.71 / DSM 1257 / FGSC 987).